The primary structure comprises 535 residues: Growth-regulating factor 2 (535 aa).

The QLQ domain occupies 164 to 199 (PFTLTQWAELEQQALIYKYITANVPVPSSLLISIKK). A WRC domain is found at 227-271 (DPEPGRCRRTDGKKWRCSRDAVPDQKYCERHINRGRHRSRKPVEV). Short sequence motifs (bipartite nuclear localization signal) lie at residues 232 to 242 (RCRRTDGKKWR) and 260 to 267 (RGRHRSRK). Disordered regions lie at residues 260–308 (RGRH…ASSN), 417–437 (PIASSSPSSTHNNNNAQEKTT), and 514–535 (SSVSSPIAENNRHNGDYFHYTT). The segment covering 272 to 291 (QSGQNQTAAAASKAVTTPQQ) has biased composition (polar residues). The span at 299–308 (NRSNARASSN) shows a compositional bias: low complexity. Residues 426 to 437 (THNNNNAQEKTT) show a composition bias toward polar residues.

The protein belongs to the GRF family. Interacts with GIF1. As to expression, strongly expressed in actively growing and developing tissues, such as roots, upper stems, and shoot tips containing the shoot apical meristem (SAM) and flower buds. Detected in young leaf primordium. Also expressed in mature flowers, but weakly expressed in mature stems and leaves.

It localises to the nucleus. Its function is as follows. Transcription activator that plays a role in the regulation of cell expansion in leaf and cotyledons tissues. Component of a network formed by miR396, the GRFs and their interacting factors (GIFs) acting in the regulation of meristem function, at least partially through the control of cell proliferation. The protein is Growth-regulating factor 2 (GRF2) of Arabidopsis thaliana (Mouse-ear cress).